The primary structure comprises 262 residues: Hydroxyethylthiazole kinase (262 aa).

M50 contacts substrate. Positions 125 and 171 each coordinate ATP. Residue G198 coordinates substrate.

The protein belongs to the Thz kinase family. Mg(2+) is required as a cofactor.

It catalyses the reaction 5-(2-hydroxyethyl)-4-methylthiazole + ATP = 4-methyl-5-(2-phosphooxyethyl)-thiazole + ADP + H(+). It functions in the pathway cofactor biosynthesis; thiamine diphosphate biosynthesis; 4-methyl-5-(2-phosphoethyl)-thiazole from 5-(2-hydroxyethyl)-4-methylthiazole: step 1/1. Functionally, catalyzes the phosphorylation of the hydroxyl group of 4-methyl-5-beta-hydroxyethylthiazole (THZ). The chain is Hydroxyethylthiazole kinase from Escherichia coli O139:H28 (strain E24377A / ETEC).